We begin with the raw amino-acid sequence, 717 residues long: Translation initiation factor eIF2B subunit epsilon (717 aa).

Residues M1–R14 show a composition bias toward low complexity. The interval M1–P37 is disordered. R18 carries the omega-N-methylarginine modification. Over residues R18–Q29 the composition is skewed to gly residues. S23 carries the phosphoserine modification. Residues K57 and K99 each participate in a glycyl lysine isopeptide (Lys-Gly) (interchain with G-Cter in ubiquitin) cross-link. The residue at position 126 (S126) is a Phosphoserine. Residues K137 and K213 each participate in a glycyl lysine isopeptide (Lys-Gly) (interchain with G-Cter in ubiquitin) cross-link. At T318 the chain carries Phosphothreonine. Positions G442 to Y479 are disordered. Residues S446, S462, and S465 each carry the phosphoserine modification. Positions A452–A467 are enriched in acidic residues. Residue K501 forms a Glycyl lysine isopeptide (Lys-Gly) (interchain with G-Cter in ubiquitin) linkage. The interval T517–A538 is disordered. Residues E519–E533 show a composition bias toward acidic residues. S528 and S536 each carry phosphoserine. The W2 domain maps to G539–D716. S540 carries the phosphoserine; by DYRK2 modification. Residue S713 is modified to Phosphoserine.

This sequence belongs to the eIF-2B gamma/epsilon subunits family. Component of the translation initiation factor 2B (eIF2B) complex which is a heterodecamer of two sets of five different subunits: alpha, beta, gamma, delta and epsilon. Subunits alpha, beta and delta comprise a regulatory subcomplex and subunits epsilon and gamma comprise a catalytic subcomplex. Within the complex, the hexameric regulatory complex resides at the center, with the two heterodimeric catalytic subcomplexes bound on opposite sides. Post-translationally, phosphorylated at Ser-540 by DYRK2; this is required for subsequent phosphorylation by GSK3B. Phosphorylated on serine and threonine residues by GSK3B; phosphorylation inhibits its function. Polyubiquitinated, probably by NEDD4.

The protein resides in the cytoplasm. The protein localises to the cytosol. Its activity is regulated as follows. Activated by the chemical integrated stress response (ISR) inhibitor ISRIB which stimulates guanine nucleotide exchange factor activity for both phosphorylated and unphosphorylated eIF2. Functionally, acts as a component of the translation initiation factor 2B (eIF2B) complex, which catalyzes the exchange of GDP for GTP on eukaryotic initiation factor 2 (eIF2) gamma subunit. Its guanine nucleotide exchange factor activity is repressed when bound to eIF2 complex phosphorylated on the alpha subunit, thereby limiting the amount of methionyl-initiator methionine tRNA available to the ribosome and consequently global translation is repressed. The sequence is that of Translation initiation factor eIF2B subunit epsilon (Eif2b5) from Mus musculus (Mouse).